Here is a 1058-residue protein sequence, read N- to C-terminus: Carbamoyl phosphate synthase large chain (1058 aa).

The interval 1–401 (MPKRTDIQKI…SLLKACRSLE (401 aa)) is carboxyphosphate synthetic domain. 12 residues coordinate ATP: arginine 129, arginine 169, glycine 175, glycine 176, arginine 208, isoleucine 210, glutamate 215, glycine 241, isoleucine 242, histidine 243, glutamine 284, and glutamate 298. Positions 133–327 (KQLMEELEQP…IAKLAAKIAV (195 aa)) constitute an ATP-grasp 1 domain. Glutamine 284, glutamate 298, and asparagine 300 together coordinate Mg(2+). 3 residues coordinate Mn(2+): glutamine 284, glutamate 298, and asparagine 300. An oligomerization domain region spans residues 402 to 546 (IGVHHNEIPE…YSTYGWENES (145 aa)). The carbamoyl phosphate synthetic domain stretch occupies residues 547–929 (IRSDKESVLV…ALYKAFEASY (383 aa)). The region spanning 671–861 (EQALKELDIP…MAQVATKLIL (191 aa)) is the ATP-grasp 2 domain. ATP is bound by residues arginine 707, serine 746, isoleucine 748, glutamate 752, glycine 777, valine 778, histidine 779, serine 780, glutamine 820, and glutamate 832. The Mg(2+) site is built by glutamine 820, glutamate 832, and asparagine 834. Mn(2+) is bound by residues glutamine 820, glutamate 832, and asparagine 834. The MGS-like domain maps to 930 to 1058 (LHLPTFGNVV…ESRSFVTEAI (129 aa)). An allosteric domain region spans residues 930–1058 (LHLPTFGNVV…ESRSFVTEAI (129 aa)).

This sequence belongs to the CarB family. In terms of assembly, composed of two chains; the small (or glutamine) chain promotes the hydrolysis of glutamine to ammonia, which is used by the large (or ammonia) chain to synthesize carbamoyl phosphate. Tetramer of heterodimers (alpha,beta)4. Mg(2+) is required as a cofactor. The cofactor is Mn(2+).

The enzyme catalyses hydrogencarbonate + L-glutamine + 2 ATP + H2O = carbamoyl phosphate + L-glutamate + 2 ADP + phosphate + 2 H(+). It carries out the reaction hydrogencarbonate + NH4(+) + 2 ATP = carbamoyl phosphate + 2 ADP + phosphate + 2 H(+). Its pathway is amino-acid biosynthesis; L-arginine biosynthesis; carbamoyl phosphate from bicarbonate: step 1/1. It participates in pyrimidine metabolism; UMP biosynthesis via de novo pathway; (S)-dihydroorotate from bicarbonate: step 1/3. Large subunit of the glutamine-dependent carbamoyl phosphate synthetase (CPSase). CPSase catalyzes the formation of carbamoyl phosphate from the ammonia moiety of glutamine, carbonate, and phosphate donated by ATP, constituting the first step of 2 biosynthetic pathways, one leading to arginine and/or urea and the other to pyrimidine nucleotides. The large subunit (synthetase) binds the substrates ammonia (free or transferred from glutamine from the small subunit), hydrogencarbonate and ATP and carries out an ATP-coupled ligase reaction, activating hydrogencarbonate by forming carboxy phosphate which reacts with ammonia to form carbamoyl phosphate. In Streptococcus pneumoniae (strain 70585), this protein is Carbamoyl phosphate synthase large chain.